The primary structure comprises 280 residues: Pantothenate synthetase (280 aa).

M30 to H37 lines the ATP pocket. The active-site Proton donor is H37. A (R)-pantoate-binding site is contributed by Q61. Residue Q61 coordinates beta-alanine. G147 to D150 lines the ATP pocket. Q153 contributes to the (R)-pantoate binding site. ATP is bound by residues V176 and M184 to R187.

Belongs to the pantothenate synthetase family. As to quaternary structure, homodimer.

The protein resides in the cytoplasm. It carries out the reaction (R)-pantoate + beta-alanine + ATP = (R)-pantothenate + AMP + diphosphate + H(+). It functions in the pathway cofactor biosynthesis; (R)-pantothenate biosynthesis; (R)-pantothenate from (R)-pantoate and beta-alanine: step 1/1. Catalyzes the condensation of pantoate with beta-alanine in an ATP-dependent reaction via a pantoyl-adenylate intermediate. The polypeptide is Pantothenate synthetase (Thermotoga petrophila (strain ATCC BAA-488 / DSM 13995 / JCM 10881 / RKU-1)).